The sequence spans 126 residues: UPF0538 protein C2orf76 homolog (126 aa).

The protein belongs to the UPF0538 family.

The protein is UPF0538 protein C2orf76 homolog of Danio rerio (Zebrafish).